The following is a 244-amino-acid chain: Orotidine 5'-phosphate decarboxylase (244 aa).

Substrate contacts are provided by residues aspartate 10, lysine 32, aspartate 59 to threonine 68, threonine 122, arginine 184, glutamine 193, glycine 213, and arginine 214. Residue lysine 61 is the Proton donor of the active site.

The protein belongs to the OMP decarboxylase family. Type 1 subfamily. As to quaternary structure, homodimer.

The catalysed reaction is orotidine 5'-phosphate + H(+) = UMP + CO2. Its pathway is pyrimidine metabolism; UMP biosynthesis via de novo pathway; UMP from orotate: step 2/2. Catalyzes the decarboxylation of orotidine 5'-monophosphate (OMP) to uridine 5'-monophosphate (UMP). The chain is Orotidine 5'-phosphate decarboxylase from Bacillus caldolyticus.